The chain runs to 156 residues: Ribosomal RNA large subunit methyltransferase H (156 aa).

S-adenosyl-L-methionine contacts are provided by residues L73, G104, and 123–128; that span reads LSALTL.

Belongs to the RNA methyltransferase RlmH family. In terms of assembly, homodimer.

The protein localises to the cytoplasm. The catalysed reaction is pseudouridine(1915) in 23S rRNA + S-adenosyl-L-methionine = N(3)-methylpseudouridine(1915) in 23S rRNA + S-adenosyl-L-homocysteine + H(+). In terms of biological role, specifically methylates the pseudouridine at position 1915 (m3Psi1915) in 23S rRNA. This Shewanella oneidensis (strain ATCC 700550 / JCM 31522 / CIP 106686 / LMG 19005 / NCIMB 14063 / MR-1) protein is Ribosomal RNA large subunit methyltransferase H.